Reading from the N-terminus, the 157-residue chain is Transcription elongation factor GreA (157 aa).

Belongs to the GreA/GreB family.

Necessary for efficient RNA polymerase transcription elongation past template-encoded arresting sites. The arresting sites in DNA have the property of trapping a certain fraction of elongating RNA polymerases that pass through, resulting in locked ternary complexes. Cleavage of the nascent transcript by cleavage factors such as GreA or GreB allows the resumption of elongation from the new 3'terminus. GreA releases sequences of 2 to 3 nucleotides. This chain is Transcription elongation factor GreA, found in Bartonella tribocorum (strain CIP 105476 / IBS 506).